The sequence spans 130 residues: Granulin (130 aa).

A signal peptide spans 1–26 (MNYSKIFIFGIISLILMALFSSTVES). 2 disulfide bridges follow: cysteine 67/cysteine 79 and cysteine 73/cysteine 89.

It belongs to the granulin family. In terms of processing, granulins are disulfide bridged.

It localises to the secreted. This is Granulin (grn) from Dictyostelium discoideum (Social amoeba).